The following is a 194-amino-acid chain: Probable GTP-binding protein EngB (194 aa).

The EngB-type G domain occupies 22 to 194; the sequence is KIPQIAIVGK…LRIFEEVIEK (173 aa). GTP is bound by residues 30–37, 57–61, 75–78, 142–145, and 173–175; these read GKSNVGKS, GKTRG, DLPG, TKAD, and FSA. Positions 37 and 59 each coordinate Mg(2+).

The protein belongs to the TRAFAC class TrmE-Era-EngA-EngB-Septin-like GTPase superfamily. EngB GTPase family. Requires Mg(2+) as cofactor.

Its function is as follows. Necessary for normal cell division and for the maintenance of normal septation. The protein is Probable GTP-binding protein EngB of Caldanaerobacter subterraneus subsp. tengcongensis (strain DSM 15242 / JCM 11007 / NBRC 100824 / MB4) (Thermoanaerobacter tengcongensis).